Consider the following 398-residue polypeptide: Cytochrome b (398 aa).

4 helical membrane passes run F38–M58, W82–F104, V119–V139, and F185–A205. Heme b contacts are provided by H88 and H102. Residues H189 and H203 each contribute to the heme b site. H208 contacts a ubiquinone. 4 helical membrane-spanning segments follow: residues F231–F251, A295–K315, I327–C347, and F354–P373.

The protein belongs to the cytochrome b family. The main subunits of complex b-c1 are: cytochrome b, cytochrome c1 and the Rieske protein. The cofactor is heme b.

The protein resides in the mitochondrion inner membrane. In terms of biological role, component of the ubiquinol-cytochrome c reductase complex (complex III or cytochrome b-c1 complex) that is part of the mitochondrial respiratory chain. The b-c1 complex mediates electron transfer from ubiquinol to cytochrome c. Contributes to the generation of a proton gradient across the mitochondrial membrane that is then used for ATP synthesis. This chain is Cytochrome b (MT-CYB), found in Triticum aestivum (Wheat).